A 468-amino-acid polypeptide reads, in one-letter code: N-acetyltransferase SLI1 (468 aa).

Its subcellular location is the endoplasmic reticulum. Its function is as follows. Confers resistance to the sphingolipid biosynthesis inhibitor drug myriocin (ISP-1). Inactivates ISP-1 by converting it into N-acetyl-myriocin. Cooperates with YPK1 in mediating resistance to myriocin. This chain is N-acetyltransferase SLI1 (SLI1), found in Saccharomyces cerevisiae (strain ATCC 204508 / S288c) (Baker's yeast).